We begin with the raw amino-acid sequence, 282 residues long: Protoheme IX farnesyltransferase (282 aa).

9 consecutive transmembrane segments (helical) span residues 9-29 (LAKPGIIFGNLITLTGGFLLA), 39-59 (LPLFVYVMIGVALMIAAGCVF), 79-99 (LVTGDISVIQATIYGTILLIL), 102-122 (LVLYYLVNLLTLWIIIIGFIV), 139-159 (VLGGISGAIPPVAGYTAVVNI), 165-185 (LALFLILFFWQIPHSYAIAML), 210-230 (IMLFYLALFVVSCALPAVLGS), 231-251 (ADLFSFIVCMLVALFWMYKSI), and 261-281 (VFAKTVFKFSIIVITAICLTM).

Belongs to the UbiA prenyltransferase family. Protoheme IX farnesyltransferase subfamily.

It is found in the cell inner membrane. It carries out the reaction heme b + (2E,6E)-farnesyl diphosphate + H2O = Fe(II)-heme o + diphosphate. It functions in the pathway porphyrin-containing compound metabolism; heme O biosynthesis; heme O from protoheme: step 1/1. Functionally, converts heme B (protoheme IX) to heme O by substitution of the vinyl group on carbon 2 of heme B porphyrin ring with a hydroxyethyl farnesyl side group. The sequence is that of Protoheme IX farnesyltransferase from Francisella tularensis subsp. novicida (strain U112).